A 144-amino-acid chain; its full sequence is Large ribosomal subunit protein uL13 (144 aa).

Belongs to the universal ribosomal protein uL13 family. Part of the 50S ribosomal subunit.

This protein is one of the early assembly proteins of the 50S ribosomal subunit, although it is not seen to bind rRNA by itself. It is important during the early stages of 50S assembly. The chain is Large ribosomal subunit protein uL13 from Blochmanniella pennsylvanica (strain BPEN).